Here is a 224-residue protein sequence, read N- to C-terminus: Small ribosomal subunit protein uS3 (224 aa).

A KH type-2 domain is found at I39 to K107.

Belongs to the universal ribosomal protein uS3 family. As to quaternary structure, part of the 30S ribosomal subunit. Forms a tight complex with proteins S10 and S14.

Binds the lower part of the 30S subunit head. Binds mRNA in the 70S ribosome, positioning it for translation. The chain is Small ribosomal subunit protein uS3 from Chlamydia trachomatis serovar A (strain ATCC VR-571B / DSM 19440 / HAR-13).